Consider the following 392-residue polypeptide: S-adenosylmethionine synthase (392 aa).

ATP is bound at residue His-20. Asp-22 contacts Mg(2+). K(+) is bound at residue Glu-48. L-methionine is bound by residues Glu-61 and Gln-106. Positions Gln-106 to Lys-116 are flexible loop. ATP is bound by residues Asp-171–Lys-173, Asp-248, Arg-254–Lys-255, Ala-271, and Lys-275. An L-methionine-binding site is contributed by Asp-248. Lys-279 contacts L-methionine.

It belongs to the AdoMet synthase family. As to quaternary structure, homotetramer; dimer of dimers. Requires Mg(2+) as cofactor. K(+) serves as cofactor.

It is found in the cytoplasm. The catalysed reaction is L-methionine + ATP + H2O = S-adenosyl-L-methionine + phosphate + diphosphate. The protein operates within amino-acid biosynthesis; S-adenosyl-L-methionine biosynthesis; S-adenosyl-L-methionine from L-methionine: step 1/1. Catalyzes the formation of S-adenosylmethionine (AdoMet) from methionine and ATP. The overall synthetic reaction is composed of two sequential steps, AdoMet formation and the subsequent tripolyphosphate hydrolysis which occurs prior to release of AdoMet from the enzyme. The protein is S-adenosylmethionine synthase of Borreliella afzelii (strain PKo) (Borrelia afzelii).